A 65-amino-acid polypeptide reads, in one-letter code: Large ribosomal subunit protein uL29 (65 aa).

It belongs to the universal ribosomal protein uL29 family.

The sequence is that of Large ribosomal subunit protein uL29 from Lactobacillus helveticus (strain DPC 4571).